A 250-amino-acid polypeptide reads, in one-letter code: Acyl-coenzyme A diphosphatase fit1 (250 aa).

Topologically, residues 1–23 (MTEKTASHYWNEETSILKLRRKD) are cytoplasmic. Residues 24-44 (ILLFEIYATTLLLGSIYSIYV) form a helical membrane-spanning segment. Topologically, residues 45–58 (DKWSITSYFGNSKN) are lumenal. Residues 59–79 (LINLIFVKRGWFWTSLVYFYH) form a helical membrane-spanning segment. At 80-95 (AWDQKRNKIDFKFISR) the chain is on the cytoplasmic side. The chain crosses the membrane as a helical span at residues 96–116 (YIVATLWWMFVTQWFIGPGLI). The Lumenal segment spans residues 117-160 (DRTFALSGGSCKNFDGDSSVFIPLTASTCKGLNGSWSGGHDLSG). Asn149 carries an N-linked (GlcNAc...) asparagine glycan. His161 is an active-site residue. A helical membrane pass occupies residues 161–181 (HVFLLTHSSLFMLSENFSFIL). Residues 182-191 (NNGIKATSTK) are Cytoplasmic-facing. The helical transmembrane segment at 192-212 (VLFGLLGLWWWMLFVTASFYH) threads the bilayer. The active site involves His212. A topological domain (lumenal) is located at residue Thr213. A helical transmembrane segment spans residues 214–234 (TFEKCTGFFSGILEWSIVYVF). Topologically, residues 235 to 250 (SSRMPAVADLLGSSDY) are cytoplasmic.

This sequence belongs to the FIT family. Fungal FIT2B/SCS3 subfamily.

The protein localises to the endoplasmic reticulum membrane. It carries out the reaction an acyl-CoA + H2O = an acyl-4'-phosphopantetheine + adenosine 3',5'-bisphosphate + 2 H(+). The catalysed reaction is (9Z)-octadecenoyl-CoA + H2O = S-(9Z-octadecenoyl)-4'-phosphopantetheine + adenosine 3',5'-bisphosphate + 2 H(+). It catalyses the reaction (5Z,8Z,11Z,14Z)-eicosatetraenoyl-CoA + H2O = S-(5Z,8Z,11Z,14Z-eicosatetraenoyl)-4'-phosphopantetheine + adenosine 3',5'-bisphosphate + 2 H(+). The enzyme catalyses hexadecanoyl-CoA + H2O = S-hexadecanoyl-4'-phosphopantetheine + adenosine 3',5'-bisphosphate + 2 H(+). Its function is as follows. Fatty acyl-coenzyme A (CoA) diphosphatase that hydrolyzes fatty acyl-CoA to yield acyl-4'-phosphopantetheine and adenosine 3',5'-bisphosphate. Preferentially hydrolyzes unsaturated long-chain acyl-CoA substrates in the endoplasmic reticulum (ER) lumen. This catalytic activity is required for maintaining ER structure and for lipid droplets (LDs) biogenesis, which are lipid storage organelles involved in maintaining lipid and energy homeostasis. May directly bind to diacylglycerol (DAGs) and triacylglycerol, which is also important for LD biogenesis. May support directional budding of nacent LDs from the ER into the cytosol by reducing DAG levels at sites of LD formation. May play a role in the regulation of cell morphology and cytoskeletal organization. The protein is Acyl-coenzyme A diphosphatase fit1 of Schizosaccharomyces pombe (strain 972 / ATCC 24843) (Fission yeast).